The chain runs to 469 residues: DENN domain-containing protein 2D (469 aa).

The disordered stretch occupies residues 17-44 (LPRLRAGQSQNNPGEAVTEPERIQEHSP). Residues 55–204 (EYLLVVSLKK…AFPAPGKTVT (150 aa)) form the uDENN domain. The 134-residue stretch at 226 to 359 (HLEHVDFSVL…LQDDILDSLG (134 aa)) folds into the cDENN domain. In terms of domain architecture, dDENN spans 361-445 (GINELKTSEQ…QEAEKSRNPP (85 aa)).

The protein resides in the cytoplasm. Guanine nucleotide exchange factor (GEF) which may activate RAB9A and RAB9B. Promotes the exchange of GDP to GTP, converting inactive GDP-bound Rab proteins into their active GTP-bound form. The protein is DENN domain-containing protein 2D (Dennd2d) of Mus musculus (Mouse).